We begin with the raw amino-acid sequence, 194 residues long: UPF0215 protein Mbar_A0619 (194 aa).

This sequence belongs to the UPF0215 family.

This Methanosarcina barkeri (strain Fusaro / DSM 804) protein is UPF0215 protein Mbar_A0619.